Reading from the N-terminus, the 318-residue chain is Elongation factor Ts, mitochondrial (318 aa).

Residues 1–18 (MLLQRFFTRALHSTRQLY) constitute a mitochondrion transit peptide.

The protein belongs to the EF-Ts family.

It is found in the mitochondrion. Functionally, associates with the EF-Tu.GDP complex and induces the exchange of GDP to GTP. It remains bound to the aminoacyl-tRNA.EF-Tu.GTP complex up to the GTP hydrolysis stage on the ribosome. This Drosophila melanogaster (Fruit fly) protein is Elongation factor Ts, mitochondrial.